Reading from the N-terminus, the 93-residue chain is Large ribosomal subunit protein bL27 (93 aa).

Residues 1–8 constitute a propeptide that is removed on maturation; that stretch reads MIMDLQFF. A disordered region spans residues 8–29; the sequence is FSHHKGGGSTANGRNSAGRRLG.

Belongs to the bacterial ribosomal protein bL27 family. In terms of processing, the N-terminus is cleaved by ribosomal processing cysteine protease Prp.

In Limosilactobacillus reuteri (strain DSM 20016) (Lactobacillus reuteri), this protein is Large ribosomal subunit protein bL27.